A 557-amino-acid polypeptide reads, in one-letter code: MLRSDAVTKGIQRSPNRAMLRAVGFGDADFGKPILGIANGYSTITPCNIGLDVLAKRAEEAARLAGGMPQMFGTITVSDGISMGTEGMKYSLVSREVIADAIETACNGQSMDGVLAVGGCDKNMPGAMLAMARMNIPSVFVYGGTIKPGKLGGCDLTVVSAFEAVGQITSGKIDEEQLTAVEKNACPGAGSCGGMFTANTMSAAIETMGLSLPYSSTMAAEDQEKADSAARSAEVLVDAVKANIRPLDLLTTEAFENAISVIMAVGGSTNAVLHLLAIARTAGVDLSIDDFERIRQRVPVICDLKPSGRFVTVDLHNAGGIPQVMKLLLDAGLLHGDCQTVEGKSLNELLADVPSEPPADQEVIRPLTNPMYSKGHLAILKGNLAIEGSVAKISGVKTPVLTGPARVFESEEDCLASILEKKINAGDVVVIRYEGPVGGPGMREMLAPTSAIVGQGLGDKVALITDGRFSGGTYGLVVGHVAPEAAVGGTIGLVQEGDSITVDANQLLLQLNVDETELAKRRAAWSKPKPRYTTGILGKYARLVSTSSKGAVTDQPD.

Position 47 (cysteine 47) interacts with [2Fe-2S] cluster. Aspartate 79 is a binding site for Mg(2+). Cysteine 120 lines the [2Fe-2S] cluster pocket. Mg(2+)-binding residues include aspartate 121 and lysine 122. At lysine 122 the chain carries N6-carboxylysine. Residue cysteine 192 coordinates [2Fe-2S] cluster. A Mg(2+)-binding site is contributed by glutamate 444. Catalysis depends on serine 470, which acts as the Proton acceptor.

It belongs to the IlvD/Edd family. As to quaternary structure, homodimer. It depends on [2Fe-2S] cluster as a cofactor. Mg(2+) is required as a cofactor.

The catalysed reaction is (2R)-2,3-dihydroxy-3-methylbutanoate = 3-methyl-2-oxobutanoate + H2O. It catalyses the reaction (2R,3R)-2,3-dihydroxy-3-methylpentanoate = (S)-3-methyl-2-oxopentanoate + H2O. Its pathway is amino-acid biosynthesis; L-isoleucine biosynthesis; L-isoleucine from 2-oxobutanoate: step 3/4. It functions in the pathway amino-acid biosynthesis; L-valine biosynthesis; L-valine from pyruvate: step 3/4. In terms of biological role, functions in the biosynthesis of branched-chain amino acids. Catalyzes the dehydration of (2R,3R)-2,3-dihydroxy-3-methylpentanoate (2,3-dihydroxy-3-methylvalerate) into 2-oxo-3-methylpentanoate (2-oxo-3-methylvalerate) and of (2R)-2,3-dihydroxy-3-methylbutanoate (2,3-dihydroxyisovalerate) into 2-oxo-3-methylbutanoate (2-oxoisovalerate), the penultimate precursor to L-isoleucine and L-valine, respectively. The sequence is that of Dihydroxy-acid dehydratase from Synechococcus sp. (strain CC9902).